A 244-amino-acid chain; its full sequence is Acetylglutamate kinase (244 aa).

Substrate contacts are provided by residues 40–41, Arg-62, and Asn-155; that span reads GG.

The protein belongs to the acetylglutamate kinase family. ArgB subfamily.

Its subcellular location is the cytoplasm. It carries out the reaction N-acetyl-L-glutamate + ATP = N-acetyl-L-glutamyl 5-phosphate + ADP. The protein operates within amino-acid biosynthesis; L-arginine biosynthesis; N(2)-acetyl-L-ornithine from L-glutamate: step 2/4. Catalyzes the ATP-dependent phosphorylation of N-acetyl-L-glutamate. The sequence is that of Acetylglutamate kinase from Leuconostoc mesenteroides subsp. mesenteroides (strain ATCC 8293 / DSM 20343 / BCRC 11652 / CCM 1803 / JCM 6124 / NCDO 523 / NBRC 100496 / NCIMB 8023 / NCTC 12954 / NRRL B-1118 / 37Y).